The sequence spans 247 residues: 2,3-bisphosphoglycerate-dependent phosphoglycerate mutase (247 aa).

Substrate-binding positions include 8–15 (RHGESVWN), 21–22 (TG), R60, 87–90 (ERHY), K98, 114–115 (RR), and 183–184 (GN). The active-site Tele-phosphohistidine intermediate is H9. E87 acts as the Proton donor/acceptor in catalysis.

This sequence belongs to the phosphoglycerate mutase family. BPG-dependent PGAM subfamily.

The catalysed reaction is (2R)-2-phosphoglycerate = (2R)-3-phosphoglycerate. It functions in the pathway carbohydrate degradation; glycolysis; pyruvate from D-glyceraldehyde 3-phosphate: step 3/5. In terms of biological role, catalyzes the interconversion of 2-phosphoglycerate and 3-phosphoglycerate. This is 2,3-bisphosphoglycerate-dependent phosphoglycerate mutase from Thermobifida fusca (strain YX).